Reading from the N-terminus, the 667-residue chain is WD repeat-containing protein 48 homolog (667 aa).

WD repeat units lie at residues 26 to 65 (QHRN…NDKY), 71 to 110 (HHND…CMST), 113 to 152 (THRD…ALTA), 164 to 203 (GSKD…RSMK), 206 to 245 (GHTE…CIQT), 248 to 287 (VHKE…NKML), 290 to 329 (EEKA…RCTL), and 349 to 388 (KGGA…KKEE). Positions 591-615 (ETTPSGGNANNSLQNSQSDANSEGS) are disordered.

It belongs to the WD repeat WDR48 family. As to quaternary structure, catalytic component of the Usp12-46 deubiquitylase complex consisting of Usp12-46, Wdr20 and Uaf1; regulatory subunit that, together wtih Wdr20, stabilizes Usp12-46. The Usp12-46 deubiquitylase complex associates with arr/arrow; the interaction leads to deubiquitination and stabilization of arr/arrow.

Functionally, regulatory component of the Usp12-46 deubiquitylase complex. activates deubiquitination by increasing the catalytic turnover without increasing the affinity of deubiquitinating enzymes for the substrate. The complex deubiquitylates the wg/wingless-signaling receptor arr/arrow, which stabilizes the receptor and increases its concentration at the cell surface; this enhances the sensitivity of cells to wg/wingless-signal stimulation. This increases the amplitude and spatial range of the signaling response to the wg/wingless morphogen gradient, facilitating the precise concentration-dependent regulation of its target genes. Together with Wdr20 and Usp12-46 required for wg/wingless-mediated signaling in the wing imaginal disc and for wg/wingless-dependent regulation of intestinal stem cell proliferation. The polypeptide is WD repeat-containing protein 48 homolog (Drosophila virilis (Fruit fly)).